The chain runs to 163 residues: Photosystem II extrinsic protein V (163 aa).

The first 26 residues, 1 to 26, serve as a signal peptide directing secretion; the sequence is MFRRLIGVVVATVLLTFQLIVGSATA. Heme c is bound by residues C63, C66, H67, and H118.

It belongs to the cytochrome c family. PsbV subfamily. In terms of assembly, PSII is composed of 1 copy each of membrane proteins PsbA, PsbB, PsbC, PsbD, PsbE, PsbF, PsbH, PsbI, PsbJ, PsbK, PsbL, PsbM, PsbT, PsbX, PsbY, PsbZ, Psb30/Ycf12, peripheral proteins PsbO, CyanoQ (PsbQ), PsbU, PsbV and a large number of cofactors. It forms dimeric complexes. Heme c is required as a cofactor.

It is found in the cellular thylakoid membrane. Functionally, one of the extrinsic, lumenal subunits of photosystem II (PSII). PSII is a light-driven water plastoquinone oxidoreductase, using light energy to abstract electrons from H(2)O, generating a proton gradient subsequently used for ATP formation. The extrinsic proteins stabilize the structure of photosystem II oxygen-evolving complex (OEC), the ion environment of oxygen evolution and protect the OEC against heat-induced inactivation. Low-potential cytochrome c that plays a role in the OEC of PSII. The polypeptide is Photosystem II extrinsic protein V (Trichormus variabilis (strain ATCC 29413 / PCC 7937) (Anabaena variabilis)).